A 130-amino-acid polypeptide reads, in one-letter code: Large ribosomal subunit protein bL12 (130 aa).

The protein belongs to the bacterial ribosomal protein bL12 family. As to quaternary structure, homodimer. Part of the ribosomal stalk of the 50S ribosomal subunit. Forms a multimeric L10(L12)X complex, where L10 forms an elongated spine to which 2 to 4 L12 dimers bind in a sequential fashion. Binds GTP-bound translation factors.

In terms of biological role, forms part of the ribosomal stalk which helps the ribosome interact with GTP-bound translation factors. Is thus essential for accurate translation. This is Large ribosomal subunit protein bL12 from Yersinia pestis bv. Antiqua (strain Angola).